We begin with the raw amino-acid sequence, 229 residues long: Cytochrome c oxidase subunit 2 (229 aa).

The Mitochondrial intermembrane portion of the chain corresponds to 1–14; the sequence is MAQQAQLGLQDAAS. The helical transmembrane segment at 15-45 threads the bilayer; that stretch reads PIMEELIHFHDHTLTVVFLISVLIFYLIIVM. The Mitochondrial matrix portion of the chain corresponds to 46 to 59; the sequence is VTTTFMNKHSLDSQ. Residues 60-87 traverse the membrane as a helical segment; sequence EVEIVWTVMPAIVLITIALPSLRILYLT. Residues 88–229 are Mitochondrial intermembrane-facing; the sequence is DEISNPHLTI…ENWTTKVLAS (142 aa). 6 residues coordinate Cu cation: H161, C196, E198, C200, H204, and M207. Residue E198 coordinates Mg(2+).

Belongs to the cytochrome c oxidase subunit 2 family. As to quaternary structure, component of the cytochrome c oxidase (complex IV, CIV), a multisubunit enzyme composed of 14 subunits. The complex is composed of a catalytic core of 3 subunits MT-CO1, MT-CO2 and MT-CO3, encoded in the mitochondrial DNA, and 11 supernumerary subunits COX4I, COX5A, COX5B, COX6A, COX6B, COX6C, COX7A, COX7B, COX7C, COX8 and NDUFA4, which are encoded in the nuclear genome. The complex exists as a monomer or a dimer and forms supercomplexes (SCs) in the inner mitochondrial membrane with NADH-ubiquinone oxidoreductase (complex I, CI) and ubiquinol-cytochrome c oxidoreductase (cytochrome b-c1 complex, complex III, CIII), resulting in different assemblies (supercomplex SCI(1)III(2)IV(1) and megacomplex MCI(2)III(2)IV(2)). Found in a complex with TMEM177, COA6, COX18, COX20, SCO1 and SCO2. Interacts with TMEM177 in a COX20-dependent manner. Interacts with COX20. Interacts with COX16. Cu cation serves as cofactor.

Its subcellular location is the mitochondrion inner membrane. The enzyme catalyses 4 Fe(II)-[cytochrome c] + O2 + 8 H(+)(in) = 4 Fe(III)-[cytochrome c] + 2 H2O + 4 H(+)(out). Functionally, component of the cytochrome c oxidase, the last enzyme in the mitochondrial electron transport chain which drives oxidative phosphorylation. The respiratory chain contains 3 multisubunit complexes succinate dehydrogenase (complex II, CII), ubiquinol-cytochrome c oxidoreductase (cytochrome b-c1 complex, complex III, CIII) and cytochrome c oxidase (complex IV, CIV), that cooperate to transfer electrons derived from NADH and succinate to molecular oxygen, creating an electrochemical gradient over the inner membrane that drives transmembrane transport and the ATP synthase. Cytochrome c oxidase is the component of the respiratory chain that catalyzes the reduction of oxygen to water. Electrons originating from reduced cytochrome c in the intermembrane space (IMS) are transferred via the dinuclear copper A center (CU(A)) of subunit 2 and heme A of subunit 1 to the active site in subunit 1, a binuclear center (BNC) formed by heme A3 and copper B (CU(B)). The BNC reduces molecular oxygen to 2 water molecules using 4 electrons from cytochrome c in the IMS and 4 protons from the mitochondrial matrix. The polypeptide is Cytochrome c oxidase subunit 2 (MT-CO2) (Petromyzon marinus (Sea lamprey)).